The primary structure comprises 102 residues: MAKGQSLQDPFLNALRRERVPVSIYLVNGIKLQGQIESFDQFVILLKNTVSQMVYKHAISTVVPSRPVSHHSNNAGGGTSNNYHHGSNAQGSGAQQDSEETE.

Positions 9–68 (DPFLNALRRERVPVSIYLVNGIKLQGQIESFDQFVILLKNTVSQMVYKHAISTVVPSRPV) constitute a Sm domain. The interval 63–102 (VPSRPVSHHSNNAGGGTSNNYHHGSNAQGSGAQQDSEETE) is disordered. Residues 70 to 96 (HHSNNAGGGTSNNYHHGSNAQGSGAQQ) show a composition bias toward polar residues.

It belongs to the Hfq family. Homohexamer.

In terms of biological role, RNA chaperone that binds small regulatory RNA (sRNAs) and mRNAs to facilitate mRNA translational regulation in response to envelope stress, environmental stress and changes in metabolite concentrations. Also binds with high specificity to tRNAs. This Salmonella arizonae (strain ATCC BAA-731 / CDC346-86 / RSK2980) protein is RNA-binding protein Hfq.